Consider the following 710-residue polypeptide: Polyribonucleotide nucleotidyltransferase (710 aa).

The Mg(2+) site is built by D491 and D497. Residues 558 to 618 (PRIYKIQVKP…SAAQKAIEII (61 aa)) form the KH domain. One can recognise an S1 motif domain in the interval 628–696 (GRIYMGKVTR…ELGRVRLSRK (69 aa)).

It belongs to the polyribonucleotide nucleotidyltransferase family. The cofactor is Mg(2+).

Its subcellular location is the cytoplasm. The enzyme catalyses RNA(n+1) + phosphate = RNA(n) + a ribonucleoside 5'-diphosphate. Functionally, involved in mRNA degradation. Catalyzes the phosphorolysis of single-stranded polyribonucleotides processively in the 3'- to 5'-direction. The polypeptide is Polyribonucleotide nucleotidyltransferase (Thermodesulfovibrio yellowstonii (strain ATCC 51303 / DSM 11347 / YP87)).